Here is a 331-residue protein sequence, read N- to C-terminus: MAKIYTDKDASLEPLKGKTIAVIGYGIQGRAQALNLRDSGLKVIIGLRKGGNSWNLAVSEGFEVYEVSDAVAQADVIMVLIPDMEQPKVWQNQIAPFLKEGAVVDFAHGFNIHYGLIKPPKNVDVIMVAPKAPGKAVREEFLAGRGVPALVAVHQDYSGAALKYALAIAKGIGATRAGVIETTFAEETETDLIGEQIVLVGGLMELIKKGFEVLVEMGYQPEVAYFEVLNEAKLIMDLIWQRGIYGMLNGVSDTAKYGGLTVGPKIIDEEVKKKMRIFALRVKSGEFAKEWVEEYARGGLTLKKLMESARTHPIEIVGAEMRKLLFGRQQE.

Positions Ala2–Thr182 constitute a KARI N-terminal Rossmann domain. Residues Tyr25–Gln28, Arg48, Ser53, and Asp83–Gln86 contribute to the NADP(+) site. His108 is a catalytic residue. Position 134 (Gly134) interacts with NADP(+). Positions Thr183–Arg328 constitute a KARI C-terminal knotted domain. 4 residues coordinate Mg(2+): Asp191, Glu195, Glu227, and Glu231. Ser252 contributes to the substrate binding site.

Belongs to the ketol-acid reductoisomerase family. Mg(2+) serves as cofactor.

It catalyses the reaction (2R)-2,3-dihydroxy-3-methylbutanoate + NADP(+) = (2S)-2-acetolactate + NADPH + H(+). It carries out the reaction (2R,3R)-2,3-dihydroxy-3-methylpentanoate + NADP(+) = (S)-2-ethyl-2-hydroxy-3-oxobutanoate + NADPH + H(+). It functions in the pathway amino-acid biosynthesis; L-isoleucine biosynthesis; L-isoleucine from 2-oxobutanoate: step 2/4. Its pathway is amino-acid biosynthesis; L-valine biosynthesis; L-valine from pyruvate: step 2/4. Its function is as follows. Involved in the biosynthesis of branched-chain amino acids (BCAA). Catalyzes an alkyl-migration followed by a ketol-acid reduction of (S)-2-acetolactate (S2AL) to yield (R)-2,3-dihydroxy-isovalerate. In the isomerase reaction, S2AL is rearranged via a Mg-dependent methyl migration to produce 3-hydroxy-3-methyl-2-ketobutyrate (HMKB). In the reductase reaction, this 2-ketoacid undergoes a metal-dependent reduction by NADPH to yield (R)-2,3-dihydroxy-isovalerate. In Pyrobaculum islandicum (strain DSM 4184 / JCM 9189 / GEO3), this protein is Ketol-acid reductoisomerase (NADP(+)).